The sequence spans 276 residues: NADPH-dependent 7-cyano-7-deazaguanine reductase (276 aa).

A substrate-binding site is contributed by 80–82 (VES). Residue 82–83 (SK) coordinates NADPH. Cys-183 functions as the Thioimide intermediate in the catalytic mechanism. Asp-190 functions as the Proton donor in the catalytic mechanism. 222–223 (HE) contacts substrate. Residue 251 to 252 (RG) participates in NADPH binding.

This sequence belongs to the GTP cyclohydrolase I family. QueF type 2 subfamily. In terms of assembly, homodimer.

The protein resides in the cytoplasm. The enzyme catalyses 7-aminomethyl-7-carbaguanine + 2 NADP(+) = 7-cyano-7-deazaguanine + 2 NADPH + 3 H(+). Its pathway is tRNA modification; tRNA-queuosine biosynthesis. Its function is as follows. Catalyzes the NADPH-dependent reduction of 7-cyano-7-deazaguanine (preQ0) to 7-aminomethyl-7-deazaguanine (preQ1). This Burkholderia orbicola (strain MC0-3) protein is NADPH-dependent 7-cyano-7-deazaguanine reductase.